Here is a 351-residue protein sequence, read N- to C-terminus: Nicotinate-nucleotide--dimethylbenzimidazole phosphoribosyltransferase (351 aa).

E319 functions as the Proton acceptor in the catalytic mechanism.

Belongs to the CobT family.

The enzyme catalyses 5,6-dimethylbenzimidazole + nicotinate beta-D-ribonucleotide = alpha-ribazole 5'-phosphate + nicotinate + H(+). The protein operates within nucleoside biosynthesis; alpha-ribazole biosynthesis; alpha-ribazole from 5,6-dimethylbenzimidazole: step 1/2. Catalyzes the synthesis of alpha-ribazole-5'-phosphate from nicotinate mononucleotide (NAMN) and 5,6-dimethylbenzimidazole (DMB). The polypeptide is Nicotinate-nucleotide--dimethylbenzimidazole phosphoribosyltransferase (Desulforamulus reducens (strain ATCC BAA-1160 / DSM 100696 / MI-1) (Desulfotomaculum reducens)).